A 409-amino-acid chain; its full sequence is O-methyltransferase pyiA (409 aa).

A compositionally biased stretch (polar residues) spans M1–P21. Residues M1–E46 are disordered. S-adenosyl-L-methionine is bound at residue D271. The active-site Proton acceptor is the H317.

The protein belongs to the class I-like SAM-binding methyltransferase superfamily. Cation-independent O-methyltransferase family.

The protein operates within mycotoxin biosynthesis. Functionally, O-methyltransferase; part of the gene cluster that mediates the biosynthesis of the mycotoxin pyrichalasin H, a tyrosine-derived cytochalasan that inhibits the growth of rice seedlings, but also inhibits lymphocyte capping and actin polymerization and alters cell morphology. Pyrichalasin H is indicated as the responsible agent for the genus-specific pathogenicity of M.grisea toward crabgrass. The first step in the pathway is catalyzed by the O-methyltransferase pyiA which methylates free tyrosine to generate the precursor O-methyltyrosine. The hybrid PKS-NRPS pyiS, assisted by the enoyl reductase pyiC, are responsible for fusion of the O-methyltyrosine precursor and the polyketide backbone. The polyketide synthase module (PKS) of pyiS is responsible for the synthesis of the polyketide backbone and the downstream nonribosomal peptide synthetase (NRPS) amidates the carboxyl end of the polyketide with the O-methyltyrosine precursor. As the NRPS A-domain demonstrates substrate tolerance, pyiS can also use phenylalanine, tyrosine and even para-chlorophenylalanine as amino acid precursor, which leads to the production of novel cytochalasans, including halogenated cytochalasans. Because pyiS lacks a designated enoylreductase (ER) domain, the required activity is provided the enoyl reductase pyiC. Reduction by the hydrolyase pyiE leads to 1,5-dihydropyrrolone, which is substrate for dehydration and intra-molecular Diels-Alder cyclization by the Diels-Alderase pyiF to yield the required isoindolone-fused macrocycle. The tailoring cytochrome P450 monooxygenases piyD and piyG catalyze the hydroxylation at C-18 and C-7, respectivily, whereas the short-chain dehydrogenase/reductase pyiH reduces the carbonyl at C-21 in preparation for the transfer of an acetyl group by the acetyltransferase pyiB. These 3 reactions whose order is not clear yet, lead to the production of O-methylpyrichalasin J, a deacetylated pyrichalasin H. Finally, pyiB to converts O-methylpyrichalasin J into the final product pyrichalasin H via acetylation of C-21. The polypeptide is O-methyltransferase pyiA (Pyricularia grisea (Crabgrass-specific blast fungus)).